We begin with the raw amino-acid sequence, 202 residues long: Protein Mbar_A1807 (202 aa).

Residues 5-196 enclose the AMMECR1 domain; the sequence is VEGRAAVKLA…EKEPCGEVLE (192 aa).

In Methanosarcina barkeri (strain Fusaro / DSM 804), this protein is Protein Mbar_A1807.